The following is a 352-amino-acid chain: Replication-associated protein (352 aa).

The CRESS-DNA virus Rep endonuclease domain occupies 9 to 117 (QINAKNYFLT…DGDTLVWGEF (109 aa)). The RCR-1 signature appears at 16 to 19 (FLTY). A divalent metal cation-binding residues include Glu50, His58, and His60. An RCR-2 motif is present at residues 58 to 60 (HLH). Tyr104 (for DNA cleavage activity) is an active-site residue. The RCR-3 signature appears at 104–107 (YIDK). Asp108 contributes to the a divalent metal cation binding site. The segment at 144–154 (KEEALQIIREK) is binding to RBR1. The tract at residues 157 to 177 (EKYLFQFHNLNSNLDRIFDKT) is oligomerization. 223–230 (GDSRTGKT) contacts ATP.

The protein belongs to the geminiviridae Rep protein family. Homooligomer. Interacts with the replication enhancer protein (REn). Interacts with host retinoblastoma-related protein 1 (RBR1), and may thereby induce the transcription of host replicative enzymes even if the cell is not dividing anymore. Interacts with host PCNA. Interacts with host SCE1 protein. Interacts with host GRIK1, GRIK2, GRIMP and histone H3. Requires Mg(2+) as cofactor. It depends on Mn(2+) as a cofactor.

The protein resides in the host nucleus. Functionally, essential for the replication of viral ssDNA. The closed circular ssDNA genome is first converted to a superhelical dsDNA. Rep binds a specific region at the genome origin of replication. It introduces an endonucleolytic nick within the conserved sequence 5'-TAATATTAC-3' in the intergenic region of the genome present in all geminiviruses, thereby initiating the rolling circle replication (RCR). Following cleavage, binds covalently to the 5'-phosphate of DNA as a tyrosyl ester. The cleavage gives rise to a free 3'-OH that serves as a primer for the cellular DNA polymerase. The polymerase synthesizes the (+) strand DNA by rolling circle mechanism. After one round of replication, a Rep-catalyzed nucleotidyl transfer reaction releases a circular single-stranded virus genome, thereby terminating the replication. Displays origin-specific DNA cleavage, nucleotidyl transferase, ATPase and helicase activities. This Solanum lycopersicum (Tomato) protein is Replication-associated protein.